A 142-amino-acid chain; its full sequence is MLNEFKTFISKGNVMDMAVGIIIGAAFTAIVSSLVADLVNPFIALFTGGIDFSGWFYALDGETYASLAAATDAGAPVFAFGNFIMAVINFLIIAFVVFMLVKTVNRIKDAAEGEKEAVAEEPAGPTELDILKEIRDALAKQG.

Transmembrane regions (helical) follow at residues 19–39 (VGII…ADLV), 41–61 (PFIA…ALDG), and 78–98 (FAFG…FVVF).

Belongs to the MscL family. In terms of assembly, homopentamer.

It is found in the cell inner membrane. Functionally, channel that opens in response to stretch forces in the membrane lipid bilayer. May participate in the regulation of osmotic pressure changes within the cell. This is Large-conductance mechanosensitive channel from Roseobacter denitrificans (strain ATCC 33942 / OCh 114) (Erythrobacter sp. (strain OCh 114)).